Here is a 401-residue protein sequence, read N- to C-terminus: MSMALLLTSPAMKQKPAVITSPRRGSSPSRRLRVSCVTTNPARKKNETCNHFRPIKEVNNQLTHTIPQEKLEIFKSMENWAEQKLLPYLKPVEDSWQPQDFLPAPENDDEFYDRVKEIRERTKEIPDDYFVVLVGDMITEEALPTYQTTLNTLDGVKDETGGSLSPWAVWIRAWTAEENRHGDLLNKYLYLTGRVDMRHVEKTIQYLIGSGMDSKFENNPYNGFIYTSFQERATFISHGNTARLATTYGDVTLAKICGTIAADEKRHETAYTKIVEKLFEIDPDGSVQALASMMKKRITMPAHLMHDGRDNDLFDHYAAVAQRIGVYTAADYAGILEFLLRRWKVESLGLGLSGEGRRAQEYLCTLPQRIKRLEERANDRVKLVSKPSVSFSWVFGRDVKL.

A disordered region spans residues 1-31; that stretch reads MSMALLLTSPAMKQKPAVITSPRRGSSPSRR. Residues 1 to 35 constitute a chloroplast transit peptide; it reads MSMALLLTSPAMKQKPAVITSPRRGSSPSRRLRVS. Fe cation contacts are provided by Glu-140, Glu-178, His-181, Glu-231, Glu-264, and His-267.

It belongs to the fatty acid desaturase type 2 family. In terms of assembly, homodimer. It depends on Fe(2+) as a cofactor. In terms of tissue distribution, ubiquitously expressed with a preference in leaves, flowers and stems.

The protein resides in the plastid. It is found in the chloroplast. It carries out the reaction octadecanoyl-[ACP] + 2 reduced [2Fe-2S]-[ferredoxin] + O2 + 2 H(+) = (9Z)-octadecenoyl-[ACP] + 2 oxidized [2Fe-2S]-[ferredoxin] + 2 H2O. The protein operates within lipid metabolism; fatty acid metabolism. Its function is as follows. Converts stearoyl-ACP to oleoyl-ACP by introduction of a cis double bond between carbons 9 and 10 of the acyl chain. Also able to convert palmitoyl-ACP to palmitoleoyl-ACP at the C9 position. Exhibits delta-9 palmitoyl-[acyl-carrier-protein] desaturase (PAD) activity. Involved in omega-7 monounsaturated fatty acid biosynthesis, especially in the endosperm oil. This is Stearoyl-[acyl-carrier-protein] 9-desaturase 3, chloroplastic (S-ACP-DES3) from Arabidopsis thaliana (Mouse-ear cress).